We begin with the raw amino-acid sequence, 299 residues long: MAAAAGGADDESRSGRSSSDGECAVAPEPLTGPEGLFSFADFGSALGGGAGLPGRASGGAQSPLRYLHVLWQQDAEPRDELRCKIPAGRLRRAARPHRRLGPTGKEVHALKRLRDSANANDVETVQQLLEEGTDPCAADDKGRTALHFASCNGNDQIVQLLLDHGADPNQRDGLGNTPLHLAACTNHAPVITTLLRGGARVDALDRAGRTPLHLAKSKLNILQEGHSQCLEAVRLEVKQIIQMLREYLERLGRHEQRERLDDLCTRLQKTSTREQVDEVTDLLASFTSLSLQMQNMEKR.

Residues 1 to 32 are disordered; that stretch reads MAAAAGGADDESRSGRSSSDGECAVAPEPLTG. Position 2 is an N-acetylalanine (alanine 2). Residues serine 57 and serine 62 each carry the phosphoserine modification. The Nuclear localization signal (NLS) motif lies at 98-116; the sequence is RRLGPTGKEVHALKRLRDS. ANK repeat units lie at residues 108–137, 141–170, 174–203, and 207–239; these read HALK…DPCA, KGRT…DPNQ, LGNT…RVDA, and AGRT…EVKQ. The LYN-binding stretch occupies residues 140-240; the sequence is DKGRTALHFA…EAVRLEVKQI (101 aa). Residues 282-292 carry the Nuclear export signal (NES) motif; the sequence is LLASFTSLSLQ.

Interacts (via ankyrin repeat region) with LYN (via SH3-domain) in an activation-independent status of LYN. Forms a multiprotein complex with LYN and HCLS1. Interacts with TSN2, VAV1, DBNL and LASP1.

The protein resides in the nucleus. The protein localises to the cytoplasm. It localises to the midbody. Functionally, plays an important role in regulating intracellular signaling events associated with erythroid terminal differentiation. The protein is Ankyrin repeat domain-containing protein 54 (ANKRD54) of Bos taurus (Bovine).